Here is a 131-residue protein sequence, read N- to C-terminus: Profilin-1 (131 aa).

Belongs to the profilin family. In terms of assembly, occurs in many kinds of cells as a complex with monomeric actin in a 1:1 ratio.

It localises to the cytoplasm. It is found in the cytoskeleton. In terms of biological role, binds to actin and affects the structure of the cytoskeleton. At high concentrations, profilin prevents the polymerization of actin, whereas it enhances it at low concentrations. By binding to PIP2, it inhibits the formation of IP3 and DG. The protein is Profilin-1 of Hevea brasiliensis (Para rubber tree).